A 308-amino-acid polypeptide reads, in one-letter code: rRNA 2'-O-methyltransferase fibrillarin 1 (308 aa).

A disordered region spans residues 1 to 68 (MRPPVTGGRG…PRGGMKGGSK (68 aa)). A compositionally biased stretch (gly residues) spans 22-35 (GRGFGGGRSFGGGR). The segment covering 42 to 52 (SGPRGRGRGAP) has biased composition (basic residues). A compositionally biased stretch (gly residues) spans 53-65 (RGRGGPPRGGMKG). S-adenosyl-L-methionine contacts are provided by residues 156–157 (TT), 175–176 (EF), 200–201 (DA), and 220–223 (DVAQ).

The protein belongs to the methyltransferase superfamily. Fibrillarin family. Component of box C/D small nucleolar ribonucleoprotein (snoRNP) particles. Interacts with SKP1A. In terms of tissue distribution, expressed in roots, leaves and flowers. Expressed in stems.

The protein resides in the nucleus. It is found in the nucleolus. The enzyme catalyses a ribonucleotide in rRNA + S-adenosyl-L-methionine = a 2'-O-methylribonucleotide in rRNA + S-adenosyl-L-homocysteine + H(+). It catalyses the reaction L-glutaminyl-[histone H2A] + S-adenosyl-L-methionine = N(5)-methyl-L-glutaminyl-[histone H2A] + S-adenosyl-L-homocysteine + H(+). Functionally, S-adenosyl-L-methionine-dependent methyltransferase that has the ability to methylate both RNAs and proteins. Involved in pre-rRNA processing. Utilizes the methyl donor S-adenosyl-L-methionine to catalyze the site-specific 2'-hydroxyl methylation of ribose moieties in pre-ribosomal RNA. Site specificity is provided by a guide RNA that base pairs with the substrate. Methylation occurs at a characteristic distance from the sequence involved in base pairing with the guide RNA. Also acts as a protein methyltransferase by mediating methylation of 'Gln-105' of histone H2A (H2AQ105me), a modification that impairs binding of the FACT complex and is specifically present at 35S ribosomal DNA locus. Binds monophosphate phosphoinositides in vitro. In Arabidopsis thaliana (Mouse-ear cress), this protein is rRNA 2'-O-methyltransferase fibrillarin 1.